A 186-amino-acid chain; its full sequence is Ribosome-recycling factor (186 aa).

It belongs to the RRF family.

The protein localises to the cytoplasm. Its function is as follows. Responsible for the release of ribosomes from messenger RNA at the termination of protein biosynthesis. May increase the efficiency of translation by recycling ribosomes from one round of translation to another. In Endomicrobium trichonymphae, this protein is Ribosome-recycling factor.